The following is a 385-amino-acid chain: Cytochrome b (385 aa).

Over 1-27 (MAFRKSNVYLSLVNSYIIDSPQPSSIN) the chain is Mitochondrial matrix. Tyr-16 serves as a coordination point for a ubiquinone. A helical transmembrane segment spans residues 28-51 (YWWNMGSLLGLCLVIQIVTGIFMA). Over 52-74 (MHYSSNIELAFSSVEHIMRDVHN) the chain is Mitochondrial intermembrane. The chain crosses the membrane as a helical span at residues 75-102 (GYILRYLHANGASFFFMVMFMHMAKGLY). Positions 82 and 96 each coordinate heme b. Topologically, residues 103-110 (YGSYRSPR) are mitochondrial matrix. Residues 111 to 135 (VTLWNVGVIIFILTIATAFLGYCCV) form a helical membrane-spanning segment. The Mitochondrial intermembrane segment spans residues 136–172 (YGQMSHWGATVITNLFSAIPFVGNDIVSWLWGGFSVS). A helical membrane pass occupies residues 173–204 (NPTIQRFFALHYLVPFIIAAMVIMHLMALHIH). Residues His-183 and His-197 each contribute to the heme b site. His-202 lines the a ubiquinone pocket. Residues 205-223 (GSSNPLGITGNLDRIPMHS) lie on the Mitochondrial matrix side of the membrane. The chain crosses the membrane as a helical span at residues 224-246 (YFIFKDLVTVFLFMLILALFVFY). Residues 247–287 (SPNTLGHPDNYIPGNPLVTPASIVPEWYLLPFYAILRSIPD) are Mitochondrial intermembrane-facing. A helical transmembrane segment spans residues 288–308 (KLLGVITMFAAILVLLVLPFT). The Mitochondrial matrix portion of the chain corresponds to 309–319 (DRSVVRGNTFK). Residues 320 to 340 (VLSKFFFFIFVFNFVLLGQIG) form a helical membrane-spanning segment. Over 341-347 (ACHVEVP) the chain is Mitochondrial intermembrane. Residues 348-364 (YVLMGQIATFIYFAYFL) form a helical membrane-spanning segment. Over 365–385 (IIVPVISTIENVLFYIGRVNK) the chain is Mitochondrial matrix.

The protein belongs to the cytochrome b family. Component of the ubiquinol-cytochrome c oxidoreductase (cytochrome b-c1 complex, complex III, CIII), a multisubunit enzyme composed of 10 subunits. The complex is composed of 3 respiratory subunits cytochrome b (COB), cytochrome c1 (CYT1) and Rieske protein (RIP1), 2 core protein subunits COR1 and QCR2, and 5 low-molecular weight protein subunits QCR6, QCR7, QCR8, QCR9 and QCR10. The complex exists as an obligatory dimer and forms supercomplexes (SCs) in the inner mitochondrial membrane with a monomer or a dimer of cytochrome c oxidase (complex IV, CIV), resulting in 2 different assemblies (supercomplexes III(2)IV and III(2)IV(2)). Heme b serves as cofactor.

It localises to the mitochondrion inner membrane. The catalysed reaction is a quinol + 2 Fe(III)-[cytochrome c](out) = a quinone + 2 Fe(II)-[cytochrome c](out) + 2 H(+)(out). In terms of biological role, component of the ubiquinol-cytochrome c oxidoreductase, a multisubunit transmembrane complex that is part of the mitochondrial electron transport chain which drives oxidative phosphorylation. The respiratory chain contains 3 multisubunit complexes succinate dehydrogenase (complex II, CII), ubiquinol-cytochrome c oxidoreductase (cytochrome b-c1 complex, complex III, CIII) and cytochrome c oxidase (complex IV, CIV), that cooperate to transfer electrons derived from NADH and succinate to molecular oxygen, creating an electrochemical gradient over the inner membrane that drives transmembrane transport and the ATP synthase. The cytochrome b-c1 complex catalyzes electron transfer from ubiquinol to cytochrome c, linking this redox reaction to translocation of protons across the mitochondrial inner membrane, with protons being carried across the membrane as hydrogens on the quinol. In the process called Q cycle, 2 protons are consumed from the matrix, 4 protons are released into the intermembrane space and 2 electrons are passed to cytochrome c. Cytochrome b is a catalytic core subunit containing 2 b-type hemes BL and BH topographically segregated in the quinone reduction (Qi) and quinol oxidation (Q0) sites on opposite sides of the membrane. In Saccharomyces cerevisiae (strain ATCC 204508 / S288c) (Baker's yeast), this protein is Cytochrome b (COB).